Consider the following 291-residue polypeptide: Elongation factor Ts (291 aa).

The tract at residues 80-83 (TDFV) is involved in Mg(2+) ion dislocation from EF-Tu.

The protein belongs to the EF-Ts family.

Its subcellular location is the cytoplasm. Associates with the EF-Tu.GDP complex and induces the exchange of GDP to GTP. It remains bound to the aminoacyl-tRNA.EF-Tu.GTP complex up to the GTP hydrolysis stage on the ribosome. The protein is Elongation factor Ts of Acinetobacter baumannii (strain AB307-0294).